The following is a 1116-amino-acid chain: Auxin response factor 21 (1116 aa).

Residues Phe132–Asn234 constitute a DNA-binding region (TF-B3). Residues Lys763–Ile812 are disordered. Residues Pro768–Pro780 are compositionally biased toward low complexity. Positions Val781–Val806 are enriched in polar residues. The 85-residue stretch at Arg998–Glu1082 folds into the PB1 domain.

Belongs to the ARF family. As to quaternary structure, homodimers and heterodimers. As to expression, expressed in roots, culms, leaves and young panicles.

The protein localises to the nucleus. Auxin response factors (ARFs) are transcriptional factors that bind specifically to the DNA sequence 5'-TGTCTC-3' found in the auxin-responsive promoter elements (AuxREs). This chain is Auxin response factor 21 (ARF21), found in Oryza sativa subsp. japonica (Rice).